The primary structure comprises 449 residues: Mycosin-1 (449 aa).

The signal sequence occupies residues 1-23 (MQRVAVMVLAVLLALFSAPPAWA). Cysteines 51 and 120 form a disulfide. Residues 66-389 (PWANDYLRIQ…AGVIDPVAAL (324 aa)) form the Peptidase S8 domain. Catalysis depends on charge relay system residues Asp-92 and His-123. 2 disordered regions span residues 160 to 179 (FQPKGARQDPNDPNTTQTAG) and 240 to 259 (TGQDCSQNPPPDPSVPSDPR). A compositionally biased stretch (polar residues) spans 170-179 (NDPNTTQTAG). Cys-206 and Cys-244 are disulfide-bonded. Ser-334 functions as the Charge relay system in the catalytic mechanism. A helical transmembrane segment spans residues 421–441 (ITAVVIAGATLAFALGIGALA).

The protein belongs to the peptidase S8 family.

Its subcellular location is the cell membrane. May play a dual role in regulation of ESX-1 secretion and virulence. Acts as a protease that cleaves EspB. In Mycolicibacterium smegmatis (strain ATCC 700084 / mc(2)155) (Mycobacterium smegmatis), this protein is Mycosin-1.